The chain runs to 1009 residues: Adhesion G-protein coupled receptor G2 (1009 aa).

Residues 1–37 (MLFSGGQYSPVGRPEEVLLIYKIFLVIICFHVILVTS) form the signal peptide. Over 38–617 (LKENGNSSLL…SRTSLPPSQM (580 aa)) the chain is Extracellular. N-linked (GlcNAc...) asparagine glycans are attached at residues Asn43, Asn77, Asn91, Asn103, Asn109, Asn127, Asn136, Asn154, Asn178, and Asn186. Disordered regions lie at residues 279 to 305 (MTPSTPSLTQESNLPSPQPTIPLASSP) and 325 to 346 (SHTLSPVQSSIPSPTTPAPSVP). The segment covering 280–293 (TPSTPSLTQESNLP) has biased composition (polar residues). N-linked (GlcNAc...) asparagine glycans are attached at residues Asn362, Asn427, Asn448, Asn453, Asn520, Asn534, Asn539, Asn543, and Asn589. In terms of domain architecture, GAIN-B spans 453–611 (NTTTFAAQDP…GILLDLSRTS (159 aa)). 2 cysteine pairs are disulfide-bonded: Cys562-Cys593 and Cys581-Cys595. The GPS stretch occupies residues 562–611 (CVFWDLGRNGGKGGWSSDGCSVKDKRMNETICTCSHLTSFGILLDLSRTS). Positions 600 to 611 (SFGILLDLSRTS) are stachel. The helical transmembrane segment at 618-640 (MALTFITYIGCGLSSIFLSVTLV) threads the bilayer. Residues 641-655 (TYIAFEKIRRDYPSK) lie on the Cytoplasmic side of the membrane. The helical transmembrane segment at 656 to 679 (ILIQLCAALLLLNLIFLLDSWIAL) threads the bilayer. Residues 680–683 (YNTR) are Extracellular-facing. A helical transmembrane segment spans residues 684–709 (GFCIAVAVFLHYFLLVSFTWMGLEAF). Cys686 and Cys770 are disulfide-bonded. Residues 710 to 728 (HMYLALVKVFNTYIRKYIL) are Cytoplasmic-facing. Residues 729–751 (KFCIVGWGIPAVVVSIVLTISPD) form a helical membrane-spanning segment. Topologically, residues 752–776 (NYGIGSYGKFPNGTPDDFCWINSNV) are extracellular. The chain crosses the membrane as a helical span at residues 777-802 (VFYITVVGYFCVIFLLNVSMFIVVLV). Residues 803–823 (QLCRIKKKKQLGAQRKTSIQD) lie on the Cytoplasmic side of the membrane. Residues 824–845 (LRSIAGLTFLLGITWGFAFFAW) form a helical membrane-spanning segment. The Extracellular segment spans residues 846–850 (GPVNV). Residue Asn849 is glycosylated (N-linked (GlcNAc...) asparagine). A helical membrane pass occupies residues 851-872 (TFMYLFAIFNTLQGFFIFIFYC). 3beta-hydroxyandrost-5-en-17-one is bound at residue Asn860. Residues 873-1009 (AAKENVRKQW…RGSLHFIEQM (137 aa)) are Cytoplasmic-facing. Ser1002 bears the Phosphoserine mark.

Belongs to the G-protein coupled receptor 2 family. Adhesion G-protein coupled receptor (ADGR) subfamily. As to quaternary structure, heterodimer of 2 chains generated by proteolytic processing; the large extracellular N-terminal fragment and the membrane-bound C-terminal fragment predominantly remain associated and non-covalently linked. Interacts with CFTR. Post-translationally, proteolytically cleaved into 2 subunits, an extracellular subunit and a seven-transmembrane subunit. Highly glycosylated. As to expression, epididymis-specific expression (at protein level). Associated with apical membranes of efferent ductule and proximal epididymal duct epithelia. Mainly expressed in the nonciliated principal cells of the proximal excurrent ducts.

The protein localises to the apical cell membrane. Its activity is regulated as follows. Forms a heterodimer of 2 chains generated by proteolytic processing that remain associated through non-covalent interactions mediated by the GAIN-B domain. In the inactivated receptor, the Stachel sequence (also named stalk) is embedded in the GAIN-B domain, where it adopts a beta-strand conformation. On activation, the Stachel moves into the 7 transmembrane region and adopts a twisted hook-shaped configuration that forms contacts within the receptor, leading to coupling of a G-alpha protein, which activates signaling. The cleaved GAIN-B and N-terminal domains can then dissociate from the rest of the receptor. Deoxycorticosterone (DOC) acts as an antagonist of ADGRG2. Functionally, adhesion G-protein coupled receptor (aGPCR) for steroid hormones, such as dehydroepiandrosterone (DHEA; also named 3beta-hydroxyandrost-5-en-17-one) and androstenedione. Involved in a signal transduction pathway controlling epididymal function and male fertility. Ligand binding causes a conformation change that triggers signaling via guanine nucleotide-binding proteins (G proteins) and modulates the activity of downstream effectors, such as adenylate cyclase. ADGRG2 is coupled to G(s) G proteins and mediates activation of adenylate cyclase activity. Also able to couple with G(q) G proteins in vitro. May regulate fluid exchange within epididymis. The protein is Adhesion G-protein coupled receptor G2 of Mus musculus (Mouse).